A 304-amino-acid chain; its full sequence is Protein transport protein sec13 (304 aa).

WD repeat units follow at residues 12 to 51, 56 to 97, 102 to 143, 147 to 203, 211 to 253, and 259 to 298; these read GHDDMIHDAVLDYYGRRLATCSSDRTIKIFEIEGESQRLV, GHDG…WQRI, LHKA…WEHN, AHGL…NGYK, GHTD…PGEW, and NFDAAVWRVSWSLSGNVLAASSDNNKVTLWKENLKGEWEN.

This sequence belongs to the WD repeat SEC13 family. The COPII coat is composed of at least 5 proteins: the sec23/24 complex, the sec13/31 complex, and the protein vtr-7/sar1. Component of the nuclear pore complex (NPC). NPC constitutes the exclusive means of nucleocytoplasmic transport. NPCs allow the passive diffusion of ions and small molecules and the active, nuclear transport receptor-mediated bidirectional transport of macromolecules such as proteins, RNAs, ribonucleoparticles (RNPs), and ribosomal subunits across the nuclear envelope. Due to its 8-fold rotational symmetry, all subunits are present with 8 copies or multiples thereof.

It localises to the cytoplasmic vesicle. Its subcellular location is the COPII-coated vesicle membrane. The protein localises to the endoplasmic reticulum membrane. It is found in the nucleus. The protein resides in the nuclear pore complex. Functionally, component of the coat protein complex II (COPII) which promotes the formation of transport vesicles from the endoplasmic reticulum (ER). The coat has two main functions, the physical deformation of the endoplasmic reticulum membrane into vesicles and the selection of cargo molecules. It also functions as a component of the nuclear pore complex (NPC). NPC components, collectively referred to as nucleoporins (NUPs), can play the role of both NPC structural components and of docking or interaction partners for transiently associated nuclear transport factors. Nup-20/sec13 is required for efficient mRNA export from the nucleus to the cytoplasm and for correct nuclear pore biogenesis and distribution. This Neurospora crassa (strain ATCC 24698 / 74-OR23-1A / CBS 708.71 / DSM 1257 / FGSC 987) protein is Protein transport protein sec13 (nup-20).